The primary structure comprises 326 residues: MIRPSSLVLAAALGTAALPARAEVPRVVTDIPVVGAMVQQVMGDLGQPEILLQAGGDPHSYQLRPSQARSLQDADLLIWVGPELTPWLERAATSLSAQSEMLALLDLPATHRRDYAGGEHEHEHEHEHEHEHEHEHDGHGHAEEQAHHDHDHSGTDPHAWLDPANGQAWLAGIAETLSRHDPDNAGVYAANAAKAADEIAALDEELKSALTPTQGKRFVVFHDAYGYFTEHYGLEPAIAVSLGDASTPSAARLRAIRDEIAEEGAVCAFPEANHDPKLIAAVIEGSEIRQGAALDPEGTGATPGAGLYAELLRGMGQALADCLGAD.

A signal peptide spans 1 to 22 (MIRPSSLVLAAALGTAALPARA). H59 lines the Zn(2+) pocket. Basic and acidic residues predominate over residues 117–155 (GGEHEHEHEHEHEHEHEHEHDGHGHAEEQAHHDHDHSGT). Positions 117 to 161 (GGEHEHEHEHEHEHEHEHEHDGHGHAEEQAHHDHDHSGTDPHAWL) are disordered. Residues H158, H222, and D295 each coordinate Zn(2+). Cysteines 267 and 322 form a disulfide.

This sequence belongs to the bacterial solute-binding protein 9 family. As to quaternary structure, monomer.

Its subcellular location is the periplasm. Functionally, part of the ATP-binding cassette (ABC) transport system ZnuABC involved in zinc import. Binds zinc with high affinity and specificity and delivers it to the membrane permease for translocation into the cytoplasm. The polypeptide is High-affinity zinc uptake system protein ZnuA (Paracoccus denitrificans (strain Pd 1222)).